Consider the following 425-residue polypeptide: Histidine--tRNA ligase (425 aa).

This sequence belongs to the class-II aminoacyl-tRNA synthetase family. Homodimer.

It is found in the cytoplasm. It catalyses the reaction tRNA(His) + L-histidine + ATP = L-histidyl-tRNA(His) + AMP + diphosphate + H(+). The chain is Histidine--tRNA ligase from Streptococcus uberis (strain ATCC BAA-854 / 0140J).